Reading from the N-terminus, the 196-residue chain is Ribosome maturation factor RimP (196 aa).

Belongs to the RimP family.

The protein localises to the cytoplasm. In terms of biological role, required for maturation of 30S ribosomal subunits. The sequence is that of Ribosome maturation factor RimP from Lawsonia intracellularis (strain PHE/MN1-00).